Reading from the N-terminus, the 160-residue chain is Keratin-associated protein 13-4 (160 aa).

4 repeat units span residues 41–50 (CQLGSSLYRD), 51–60 (CQKTCWEPAS), 61–70 (CQKSCYHPRT), and 77–86 (CQTTCSGSLG). The 4 X 10 AA approximate repeats stretch occupies residues 41-86 (CQLGSSLYRDCQKTCWEPASCQKSCYHPRTSMLCCPCQTTCSGSLG).

It belongs to the PMG family. In terms of assembly, interacts with hair keratins.

In terms of biological role, in the hair cortex, hair keratin intermediate filaments are embedded in an interfilamentous matrix, consisting of hair keratin-associated proteins (KRTAP), which are essential for the formation of a rigid and resistant hair shaft through their extensive disulfide bond cross-linking with abundant cysteine residues of hair keratins. The matrix proteins include the high-sulfur and high-glycine-tyrosine keratins. This chain is Keratin-associated protein 13-4 (KRTAP13-4), found in Hylobates agilis (Agile gibbon).